A 341-amino-acid chain; its full sequence is Tyrosine recombinase XerC (341 aa).

One can recognise a Core-binding (CB) domain in the interval 14-105; sequence PDAAEALERW…GVRSFFRWAD (92 aa). The region spanning 126-309 is the Tyr recombinase domain; it reads PLPRPLAADD…DAEHLLSVYE (184 aa). Active-site residues include arginine 169, lysine 193, histidine 261, arginine 264, and histidine 287. Catalysis depends on tyrosine 296, which acts as the O-(3'-phospho-DNA)-tyrosine intermediate.

This sequence belongs to the 'phage' integrase family. XerC subfamily. As to quaternary structure, forms a cyclic heterotetrameric complex composed of two molecules of XerC and two molecules of XerD.

The protein resides in the cytoplasm. Its function is as follows. Site-specific tyrosine recombinase, which acts by catalyzing the cutting and rejoining of the recombining DNA molecules. The XerC-XerD complex is essential to convert dimers of the bacterial chromosome into monomers to permit their segregation at cell division. It also contributes to the segregational stability of plasmids. The chain is Tyrosine recombinase XerC from Rhodospirillum centenum (strain ATCC 51521 / SW).